Here is a 984-residue protein sequence, read N- to C-terminus: Ephrin type-B receptor 1 (984 aa).

The signal sequence occupies residues M1–A17. Residues M18–P540 lie on the Extracellular side of the membrane. In terms of domain architecture, Eph LBD spans E19–Q201. Fibronectin type-III domains are found at residues V322–A432 and A433–D528. N334, N426, and N480 each carry an N-linked (GlcNAc...) asparagine glycan. A helical membrane pass occupies residues L541–C563. The Cytoplasmic portion of the chain corresponds to S564–A984. Y600 carries the post-translational modification Phosphotyrosine. The region spanning V619–I882 is the Protein kinase domain. Residues I625 to V633 and K651 contribute to the ATP site. D744 acts as the Proton acceptor in catalysis. An SAM domain is found at T911 to Q975. Position 928 is a phosphotyrosine; by autocatalysis (Y928). A PDZ-binding motif is present at residues V982–A984.

The protein belongs to the protein kinase superfamily. Tyr protein kinase family. Ephrin receptor subfamily. In terms of assembly, heterotetramer upon binding of the ligand. The heterotetramer is composed of an ephrin dimer and a receptor dimer. Oligomerization is probably required to induce biological responses. Interacts with EPHB6; transphosphorylates EPHB6 to form an active signaling complex. Interacts with PICK1. Interacts (through Tyr-594) with NCK1 (via SH2 domain); activates the JUN cascade to regulate cell adhesion. The ligand-activated form interacts (through Tyr-928) with GRB7 and GRB10 (via SH2 domains). The ligand-activated form interacts (residues within the catalytic domain) with GRB2 (via SH2 domain). Interacts with GRB2, SHC1 and SRC; activates the MAPK/ERK cascade to regulate cell migration. Interacts with CBL; regulates receptor degradation through ubiquitination. Interacts with ACP1. In terms of processing, phosphorylated. Autophosphorylation is stimulated by the ligand EFNB1. Required for interaction with SH2 domain-containing interactors, for activation of the MAPK/ERK and JUN signaling cascades and for ubiquitination by CBL. Ubiquitinated; (EFNB1)ligand-induced poly- and/or multi-ubiquitination by CBL is regulated by SRC and leads to lysosomal degradation. As to expression, restricted to brain and testes.

It is found in the cell membrane. The protein resides in the early endosome membrane. It localises to the cell projection. Its subcellular location is the dendrite. It carries out the reaction L-tyrosyl-[protein] + ATP = O-phospho-L-tyrosyl-[protein] + ADP + H(+). Its function is as follows. Receptor tyrosine kinase which binds promiscuously transmembrane ephrin-B family ligands residing on adjacent cells, leading to contact-dependent bidirectional signaling into neighboring cells. The signaling pathway downstream of the receptor is referred to as forward signaling while the signaling pathway downstream of the ephrin ligand is referred to as reverse signaling. Cognate/functional ephrin ligands for this receptor include EFNB1, EFNB2 and EFNB3. During nervous system development, regulates retinal axon guidance redirecting ipsilaterally ventrotemporal retinal ganglion cells axons at the optic chiasm midline. This probably requires repulsive interaction with EFNB2. In the adult nervous system together with EFNB3, regulates chemotaxis, proliferation and polarity of the hippocampus neural progenitors. In addition to its role in axon guidance also plays an important redundant role with other ephrin-B receptors in development and maturation of dendritic spines and synapse formation. May also regulate angiogenesis. More generally, may play a role in targeted cell migration and adhesion. Upon activation by EFNB1 and probably other ephrin-B ligands activates the MAPK/ERK and the JNK signaling cascades to regulate cell migration and adhesion respectively. Involved in the maintenance of the pool of satellite cells (muscle stem cells) by promoting their self-renewal and reducing their activation and differentiation. This is Ephrin type-B receptor 1 (Ephb1) from Rattus norvegicus (Rat).